A 190-amino-acid chain; its full sequence is Carbonic anhydrase 2 (190 aa).

The protein belongs to the beta-class carbonic anhydrase family. As to quaternary structure, homohexamer.

It is found in the cytoplasm. The catalysed reaction is hydrogencarbonate + H(+) = CO2 + H2O. In terms of biological role, reversible hydration of carbon dioxide. The sequence is that of Carbonic anhydrase 2 from Flaveria linearis (Narrowleaf yellowtops).